The chain runs to 237 residues: NAD-dependent protein deacetylase (237 aa).

A Deacetylase sirtuin-type domain is found at 1–237; the sequence is MFTTSLRQAQ…LVETNRALQK (237 aa). Ala18, Thr22, Phe29, Arg30, Gln95, Asp98, and His113 together coordinate NAD(+). Phe29 contributes to the nicotinamide binding site. Residue Asp98 participates in nicotinamide binding. The active-site Proton acceptor is His113. 4 residues coordinate Zn(2+): Cys121, Cys124, Cys140, and Cys142. Positions 180, 181, 205, and 224 each coordinate NAD(+).

The protein belongs to the sirtuin family. Class U subfamily. It depends on Zn(2+) as a cofactor.

It localises to the cytoplasm. It carries out the reaction N(6)-acetyl-L-lysyl-[protein] + NAD(+) + H2O = 2''-O-acetyl-ADP-D-ribose + nicotinamide + L-lysyl-[protein]. Its function is as follows. NAD-dependent protein deacetylase which modulates the activities of several enzymes which are inactive in their acetylated form. In Shouchella clausii (strain KSM-K16) (Alkalihalobacillus clausii), this protein is NAD-dependent protein deacetylase.